Here is a 681-residue protein sequence, read N- to C-terminus: Serine/threonine-protein kinase PAK 6 (681 aa).

3 disordered regions span residues 1 to 30 (MFRK…DPKE), 200 to 256 (QSSP…ESSL), and 268 to 355 (TAAT…PRTW). The region spanning 12 to 25 (ISAPQNFQHRVHTS) is the CRIB domain. Positions 26–406 (FDPKEGKFVG…VVDQGDPRLL (381 aa)) are linker. Composition is skewed to low complexity over residues 201-212 (SSPPGASPPTGT) and 268-278 (TAATAPPSSSK). Residues 308 to 333 (SLPSDQPVGTFSPLTTSDTSSPQKSL) show a composition bias toward polar residues. In terms of domain architecture, Protein kinase spans 407–658 (LDSYVKIGEG…AQELLDHPFL (252 aa)). ATP contacts are provided by residues 413–421 (IGEGSTGIV) and K436. D526 acts as the Proton acceptor in catalysis. A Phosphoserine; by autocatalysis modification is found at S560.

This sequence belongs to the protein kinase superfamily. STE Ser/Thr protein kinase family. STE20 subfamily. As to quaternary structure, interacts tightly with GTP-bound but not GDP-bound CDC42/p21 and RAC1. Interacts with the androgen receptor AR. Interacts with IQGAP1 and PPM1B. Post-translationally, autophosphorylated. Phosphorylated by MAP2K6/MAPKK6, leading to PAK6 activation.

It is found in the cytoplasm. The protein resides in the nucleus. It carries out the reaction L-seryl-[protein] + ATP = O-phospho-L-seryl-[protein] + ADP + H(+). It catalyses the reaction L-threonyl-[protein] + ATP = O-phospho-L-threonyl-[protein] + ADP + H(+). Its function is as follows. Serine/threonine protein kinase that plays a role in the regulation of gene transcription. The kinase activity is induced by various effectors including AR or MAP2K6/MAPKK6. Phosphorylates the DNA-binding domain of androgen receptor/AR and thereby inhibits AR-mediated transcription. Also inhibits ESR1-mediated transcription. May play a role in cytoskeleton regulation by interacting with IQGAP1. May protect cells from apoptosis through phosphorylation of BAD. In Pongo abelii (Sumatran orangutan), this protein is Serine/threonine-protein kinase PAK 6 (PAK6).